The primary structure comprises 142 residues: MKTFTAKPETVKRDWYVVDATGKTLGRLATELALRLRGKHKAEYTPHVDTGDYIIVLNADKVAVTGNKRTDKVYYHHTGHIGGIKQATFEEMIARRPERVIEIAVKGMLPKGPLGRAMFRKLKVYAGNEHNHAAQQPQVLDI.

The protein belongs to the universal ribosomal protein uL13 family. Part of the 50S ribosomal subunit.

This protein is one of the early assembly proteins of the 50S ribosomal subunit, although it is not seen to bind rRNA by itself. It is important during the early stages of 50S assembly. In Citrobacter koseri (strain ATCC BAA-895 / CDC 4225-83 / SGSC4696), this protein is Large ribosomal subunit protein uL13.